We begin with the raw amino-acid sequence, 142 residues long: Large ribosomal subunit protein uL13 (142 aa).

The protein belongs to the universal ribosomal protein uL13 family. Part of the 50S ribosomal subunit.

This protein is one of the early assembly proteins of the 50S ribosomal subunit, although it is not seen to bind rRNA by itself. It is important during the early stages of 50S assembly. The chain is Large ribosomal subunit protein uL13 from Xanthomonas campestris pv. campestris (strain ATCC 33913 / DSM 3586 / NCPPB 528 / LMG 568 / P 25).